Reading from the N-terminus, the 201-residue chain is Recombination protein RecR (201 aa).

The segment at Cys-60–Cys-75 adopts a C4-type zinc-finger fold. Residues Ala-83 to Pro-178 enclose the Toprim domain.

This sequence belongs to the RecR family.

In terms of biological role, may play a role in DNA repair. It seems to be involved in an RecBC-independent recombinational process of DNA repair. It may act with RecF and RecO. In Brucella ovis (strain ATCC 25840 / 63/290 / NCTC 10512), this protein is Recombination protein RecR.